The following is an 87-amino-acid chain: Small ribosomal subunit protein uS15 (87 aa).

Belongs to the universal ribosomal protein uS15 family. As to quaternary structure, part of the 30S ribosomal subunit. Forms a bridge to the 50S subunit in the 70S ribosome, contacting the 23S rRNA.

One of the primary rRNA binding proteins, it binds directly to 16S rRNA where it helps nucleate assembly of the platform of the 30S subunit by binding and bridging several RNA helices of the 16S rRNA. Its function is as follows. Forms an intersubunit bridge (bridge B4) with the 23S rRNA of the 50S subunit in the ribosome. This is Small ribosomal subunit protein uS15 from Alkaliphilus metalliredigens (strain QYMF).